Here is a 106-residue protein sequence, read N- to C-terminus: Small ribosomal subunit protein uS10 (106 aa).

Belongs to the universal ribosomal protein uS10 family. In terms of assembly, part of the 30S ribosomal subunit.

In terms of biological role, involved in the binding of tRNA to the ribosomes. In Caldicellulosiruptor saccharolyticus (strain ATCC 43494 / DSM 8903 / Tp8T 6331), this protein is Small ribosomal subunit protein uS10.